Reading from the N-terminus, the 193-residue chain is Peptidyl-tRNA hydrolase (193 aa).

Position 17 (Y17) interacts with tRNA. The active-site Proton acceptor is H22. TRNA-binding residues include Y68, N70, and N116.

The protein belongs to the PTH family. As to quaternary structure, monomer.

It localises to the cytoplasm. The enzyme catalyses an N-acyl-L-alpha-aminoacyl-tRNA + H2O = an N-acyl-L-amino acid + a tRNA + H(+). Hydrolyzes ribosome-free peptidyl-tRNAs (with 1 or more amino acids incorporated), which drop off the ribosome during protein synthesis, or as a result of ribosome stalling. Its function is as follows. Catalyzes the release of premature peptidyl moieties from peptidyl-tRNA molecules trapped in stalled 50S ribosomal subunits, and thus maintains levels of free tRNAs and 50S ribosomes. This is Peptidyl-tRNA hydrolase from Chromobacterium violaceum (strain ATCC 12472 / DSM 30191 / JCM 1249 / CCUG 213 / NBRC 12614 / NCIMB 9131 / NCTC 9757 / MK).